The sequence spans 399 residues: Zinc finger TRAF-type-containing protein 1 (399 aa).

Positions 1–13 are enriched in gly residues; it reads MSGAEEAGGGGPA. Residues 1–21 are disordered; the sequence is MSGAEEAGGGGPAAGPAGAVP. The segment at 106–151 adopts an RING-type; degenerate zinc-finger fold; the sequence is CTVCLDLPKASVYQCTNGHLMCAGCFIHLLADARLKEEQATCPNCR. The segment at 152-210 adopts a TRAF-type zinc-finger fold; the sequence is CEISKSLCCRNLAVEKAVSELPSECGFCLRQFPRSLLERHQKEECQDRVTQCKYKRIGC.

It belongs to the ZFTRAF1 family. Interacts with LGALS3. Expressed in heart, brain, liver, testis and kidney.

The protein resides in the cytoplasm. The protein localises to the perinuclear region. In Mus musculus (Mouse), this protein is Zinc finger TRAF-type-containing protein 1.